A 635-amino-acid chain; its full sequence is Early transcription factor 70 kDa subunit (635 aa).

Residues 32 to 185 enclose the Helicase ATP-binding domain; the sequence is RSILDENNSV…SNIISIMSDE (154 aa). 45–52 lines the ATP pocket; that stretch reads HIMGSGKT. Residues 135 to 138 carry the DEXH box motif; that stretch reads DEAH.

Belongs to the helicase family. VETF subfamily. In terms of assembly, heterodimer of a 70 kDa and a 82 kDa subunit. Part of the early transcription complex composed of ETF, RAP94, and the DNA-directed RNA polymerase.

Its subcellular location is the virion. Functionally, acts with RNA polymerase to initiate transcription from early gene promoters. Is recruited by the RPO-associated protein of 94 kDa (RAP94) to form the early transcription complex, which also contains the core RNA polymerase. ETF heterodimer binds to early gene promoters. This is Early transcription factor 70 kDa subunit (VETFS) from Homo sapiens (Human).